Here is a 327-residue protein sequence, read N- to C-terminus: Tyrosine--tRNA ligase (327 aa).

Residue Tyr-33 coordinates L-tyrosine. The short motif at 38–46 (PSGVLHLGH) is the 'HIGH' region element. Positions 154, 158, 161, and 176 each coordinate L-tyrosine. The 'KMSKS' region motif lies at 212–216 (KMSSS). Residue Ser-215 participates in ATP binding.

The protein belongs to the class-I aminoacyl-tRNA synthetase family. TyrS type 3 subfamily. As to quaternary structure, homodimer.

The protein resides in the cytoplasm. The catalysed reaction is tRNA(Tyr) + L-tyrosine + ATP = L-tyrosyl-tRNA(Tyr) + AMP + diphosphate + H(+). Its function is as follows. Catalyzes the attachment of tyrosine to tRNA(Tyr) in a two-step reaction: tyrosine is first activated by ATP to form Tyr-AMP and then transferred to the acceptor end of tRNA(Tyr). The chain is Tyrosine--tRNA ligase from Halobacterium salinarum (strain ATCC 29341 / DSM 671 / R1).